The following is a 333-amino-acid chain: Transaldolase NQM1 (333 aa).

Lys-144 acts as the Schiff-base intermediate with substrate in catalysis.

This sequence belongs to the transaldolase family. Type 1 subfamily. Homodimer.

The catalysed reaction is D-sedoheptulose 7-phosphate + D-glyceraldehyde 3-phosphate = D-erythrose 4-phosphate + beta-D-fructose 6-phosphate. It participates in carbohydrate degradation; pentose phosphate pathway; D-glyceraldehyde 3-phosphate and beta-D-fructose 6-phosphate from D-ribose 5-phosphate and D-xylulose 5-phosphate (non-oxidative stage): step 2/3. Its function is as follows. Transaldolase is important for the balance of metabolites in the pentose-phosphate pathway. In Saccharomyces cerevisiae (strain ATCC 204508 / S288c) (Baker's yeast), this protein is Transaldolase NQM1 (NQM1).